We begin with the raw amino-acid sequence, 469 residues long: 3-isopropylmalate dehydratase large subunit 2 (469 aa).

Residues C347, C408, and C411 each coordinate [4Fe-4S] cluster.

The protein belongs to the aconitase/IPM isomerase family. LeuC type 1 subfamily. Heterodimer of LeuC and LeuD. Requires [4Fe-4S] cluster as cofactor.

It catalyses the reaction (2R,3S)-3-isopropylmalate = (2S)-2-isopropylmalate. It functions in the pathway amino-acid biosynthesis; L-leucine biosynthesis; L-leucine from 3-methyl-2-oxobutanoate: step 2/4. Catalyzes the isomerization between 2-isopropylmalate and 3-isopropylmalate, via the formation of 2-isopropylmaleate. The chain is 3-isopropylmalate dehydratase large subunit 2 from Mannheimia succiniciproducens (strain KCTC 0769BP / MBEL55E).